The following is a 404-amino-acid chain: Glucose-1-phosphate adenylyltransferase (404 aa).

Alpha-D-glucose 1-phosphate contacts are provided by residues Y99, G164, E179–K180, and S197.

The protein belongs to the bacterial/plant glucose-1-phosphate adenylyltransferase family.

The catalysed reaction is alpha-D-glucose 1-phosphate + ATP + H(+) = ADP-alpha-D-glucose + diphosphate. It participates in glycan biosynthesis; glycogen biosynthesis. In terms of biological role, involved in the biosynthesis of ADP-glucose, a building block, required in the biosynthesis of maltose-1-phosphate (M1P) and in the elongation reactions to produce linear alpha-1,4-glucans. Catalyzes the reaction between ATP and alpha-D-glucose 1-phosphate (G1P) to produce pyrophosphate and ADP-Glc. This chain is Glucose-1-phosphate adenylyltransferase, found in Mycolicibacterium vanbaalenii (strain DSM 7251 / JCM 13017 / BCRC 16820 / KCTC 9966 / NRRL B-24157 / PYR-1) (Mycobacterium vanbaalenii).